The sequence spans 83 residues: Hainantoxin-III 2 (83 aa).

Positions 1 to 21 are cleaved as a signal peptide; the sequence is MKASMYLALAGLVLLFVVGYA. The propeptide occupies 22-48; that stretch reads SESEEKEFPRELLSKIFAVDDFKGEER. Intrachain disulfides connect cysteine 50–cysteine 65, cysteine 57–cysteine 70, and cysteine 64–cysteine 77. Residue leucine 81 is modified to Leucine amide.

It belongs to the neurotoxin 10 (Hwtx-1) family. 15 (Hntx-3) subfamily. As to quaternary structure, monomer. As to expression, expressed by the venom gland.

It is found in the secreted. Functionally, selective antagonist of neuronal tetrodotoxin (TTX)-sensitive voltage-gated sodium channels (IC(50)=1270 nM on Nav1.1/SCN1A, 270 nM on Nav1.2/SCN2A, 491 nM on Nav1.3/SCN3A and 232 nM on Nav1.7/SCN9A). This toxin suppress Nav1.7 current amplitude without significantly altering the activation, inactivation, and repriming kinetics. Short extreme depolarizations partially activate the toxin-bound channel, indicating voltage-dependent inhibition of this toxin. This toxin increases the deactivation of the Nav1.7 current after extreme depolarizations. The toxin-Nav1.7 complex is gradually dissociated upon prolonged strong depolarizations in a voltage-dependent manner, and the unbound toxin rebinds to Nav1.7 after a long repolarization. Moreover, analysis of chimeric channels showed that the DIIS3-S4 linker is critical for toxin binding to Nav1.7. These data are consistent with this toxin interacting with Nav1.7 site 4 and trapping the domain II voltage sensor in the closed state. This is Hainantoxin-III 2 from Cyriopagopus hainanus (Chinese bird spider).